The following is a 318-amino-acid chain: MTASRDGAGLTNGATRADQAGPVIAVVGPTGAGKSDLAVEIALELGGEIVNADSMQLYRGMDIGTAKIPMVERRGVPHHLLDVWEITRAADVASYQADARRVVNGLLAAGRVPILVGGSGLYVRAVLDDLSFPGTDPAVRARLERELAEVGPGPLHERLTGLAPTAAAAILPGNGRRIVRALEVVELTGTFEATLPEYRSIYDVVQVGVDRPDLDTRIADRVELMWRAGFVDEVAALAEAGLRDGRTASRALGYAQVLAVLDGAMDSMDAAKQATTTATRRFARRQRSWFRRDPRISWLEFPDVAAALAEVRRLVGSL.

28–35 (GPTGAGKS) contributes to the ATP binding site. Residue 30 to 35 (TGAGKS) participates in substrate binding. An interaction with substrate tRNA region spans residues 53–56 (DSMQ).

Belongs to the IPP transferase family. As to quaternary structure, monomer. Requires Mg(2+) as cofactor.

It catalyses the reaction adenosine(37) in tRNA + dimethylallyl diphosphate = N(6)-dimethylallyladenosine(37) in tRNA + diphosphate. Its function is as follows. Catalyzes the transfer of a dimethylallyl group onto the adenine at position 37 in tRNAs that read codons beginning with uridine, leading to the formation of N6-(dimethylallyl)adenosine (i(6)A). The polypeptide is tRNA dimethylallyltransferase (Parafrankia sp. (strain EAN1pec)).